Reading from the N-terminus, the 122-residue chain is Large ribosomal subunit protein uL18 (122 aa).

Belongs to the universal ribosomal protein uL18 family. In terms of assembly, part of the 50S ribosomal subunit; part of the 5S rRNA/L5/L18/L25 subcomplex. Contacts the 5S and 23S rRNAs.

Its function is as follows. This is one of the proteins that bind and probably mediate the attachment of the 5S RNA into the large ribosomal subunit, where it forms part of the central protuberance. This chain is Large ribosomal subunit protein uL18, found in Dictyoglomus thermophilum (strain ATCC 35947 / DSM 3960 / H-6-12).